We begin with the raw amino-acid sequence, 320 residues long: Ferrochelatase (320 aa).

Residues histidine 194 and glutamate 275 each coordinate Fe cation.

Belongs to the ferrochelatase family. Monomer.

Its subcellular location is the cytoplasm. It carries out the reaction heme b + 2 H(+) = protoporphyrin IX + Fe(2+). The protein operates within porphyrin-containing compound metabolism; protoheme biosynthesis; protoheme from protoporphyrin-IX: step 1/1. Functionally, catalyzes the ferrous insertion into protoporphyrin IX. This Salmonella arizonae (strain ATCC BAA-731 / CDC346-86 / RSK2980) protein is Ferrochelatase.